Reading from the N-terminus, the 39-residue chain is Cytochrome b559 subunit beta (39 aa).

A helical membrane pass occupies residues 14–30 (WLAVHGLAVPTVFFLGS). H18 is a binding site for heme.

This sequence belongs to the PsbE/PsbF family. As to quaternary structure, heterodimer of an alpha subunit and a beta subunit. PSII is composed of 1 copy each of membrane proteins PsbA, PsbB, PsbC, PsbD, PsbE, PsbF, PsbH, PsbI, PsbJ, PsbK, PsbL, PsbM, PsbT, PsbX, PsbY, PsbZ, Psb30/Ycf12, at least 3 peripheral proteins of the oxygen-evolving complex and a large number of cofactors. It forms dimeric complexes. Requires heme b as cofactor.

Its subcellular location is the plastid. It localises to the chloroplast thylakoid membrane. In terms of biological role, this b-type cytochrome is tightly associated with the reaction center of photosystem II (PSII). PSII is a light-driven water:plastoquinone oxidoreductase that uses light energy to abstract electrons from H(2)O, generating O(2) and a proton gradient subsequently used for ATP formation. It consists of a core antenna complex that captures photons, and an electron transfer chain that converts photonic excitation into a charge separation. In Cedrus deodara (Deodar cedar), this protein is Cytochrome b559 subunit beta.